Here is a 427-residue protein sequence, read N- to C-terminus: MSFEKSIKAMEQAEKLMPGGVNSPVRAFKSVDTPAIFMDHGEGSKIYDIDGNEYIDYVLSWGPLILGHKNQQVISKLHEAVDKGTSFGASTLQENKLAELVIDRVPSIEKVRMVSSGTEATLDTLRLARGYTGRNKIIKFEGCYHGHSDSLLIKAGSGVATLGLPDSPGVPEGIAKNTITVPYNDLDSLKLAFEKYGDDIAGVIVEPVAGNMGVVPPVNGFLQGLRDITNEYGALLIFDEVMTGFRVGYNCAQGYFGVTPDLTCLGKVIGGGLPVGAFGGKKEIMDYIAPVGTIYQAGTLSGNPLAMTSGYETLSQLTPESYEYFNSLGDILEKGLKEVFAKHNVPITVNRAGSMIGYFLNEGPVTNFEEANKSDLKLFSNMYREMAKEGVFLPPSQFEGTFLSTAHTKDDIEKTIQAFDNALSRIV.

The residue at position 267 (K267) is an N6-(pyridoxal phosphate)lysine.

Belongs to the class-III pyridoxal-phosphate-dependent aminotransferase family. HemL subfamily. Homodimer. The cofactor is pyridoxal 5'-phosphate.

It localises to the cytoplasm. The enzyme catalyses (S)-4-amino-5-oxopentanoate = 5-aminolevulinate. Its pathway is porphyrin-containing compound metabolism; protoporphyrin-IX biosynthesis; 5-aminolevulinate from L-glutamyl-tRNA(Glu): step 2/2. The protein is Glutamate-1-semialdehyde 2,1-aminomutase 1 of Staphylococcus epidermidis (strain ATCC 35984 / DSM 28319 / BCRC 17069 / CCUG 31568 / BM 3577 / RP62A).